The sequence spans 1935 residues: Myosin-7 (1935 aa).

The Myosin N-terminal SH3-like domain maps to 32–81; it reads DLKKDVFVPDDKEEFVKAKIISREGGKITAETEHGKTVTVKEDQVLQQNP. The Myosin motor domain maps to 85–778; it reads DKIEDMAMLT…LLGLLEEMRD (694 aa). Lys129 carries the post-translational modification N6,N6,N6-trimethyllysine. 178–185 serves as a coordination point for ATP; sequence GESGAGKT. Thr378 bears the Phosphothreonine mark. 2 actin-binding regions span residues 655–677 and 757–771; these read LNKL…IPNE and RFGH…GLLG. The IQ domain maps to 781-810; it reads LSRIITRIQAQSRGVLARMEFKKLLERRDS. The stretch at 839-1935 forms a coiled coil; it reads LLKSAETEKE…DIGTKGLNEE (1097 aa). Ser1137 and Ser1269 each carry phosphoserine. Thr1282 bears the Phosphothreonine mark. Tyr1308 carries the post-translational modification Phosphotyrosine. Phosphothreonine is present on Thr1309. Phosphoserine is present on Ser1510. Thr1513 bears the Phosphothreonine mark. A disordered region spans residues 1907–1935; sequence EERADIAESQVNKLRAKSRDIGTKGLNEE. A compositionally biased stretch (basic and acidic residues) spans 1923–1935; it reads KSRDIGTKGLNEE.

It belongs to the TRAFAC class myosin-kinesin ATPase superfamily. Myosin family. As to quaternary structure, muscle myosin is a hexameric protein that consists of 2 heavy chain subunits (MHC), 2 alkali light chain subunits (MLC) and 2 regulatory light chain subunits (MLC-2). Interacts with ECPAS. Interacts (via C-terminus) with LRRC39.

Its subcellular location is the cytoplasm. The protein localises to the myofibril. It localises to the sarcomere. Myosins are actin-based motor molecules with ATPase activity essential for muscle contraction. Forms regular bipolar thick filaments that, together with actin thin filaments, constitute the fundamental contractile unit of skeletal and cardiac muscle. The chain is Myosin-7 (MYH7) from Equus caballus (Horse).